Here is a 109-residue protein sequence, read N- to C-terminus: U26-theraphotoxin-Cg1b (109 aa).

A signal peptide spans 1-18; the sequence is MNTIIPLLLLSLLITVYA. Residues 19-67 constitute a propeptide that is removed on maturation; sequence YALEDGNKEEMQDIAESEFEASNEMLQLAHLLEADRAETEEDRNSRQKR. Disulfide bonds link Cys-68-Cys-83, Cys-75-Cys-88, and Cys-82-Cys-103.

It belongs to the neurotoxin 14 (magi-1) family. 07 (Jztx-56) subfamily. As to expression, expressed by the venom gland.

It is found in the secreted. Its function is as follows. Probable ion channel inhibitor. This Chilobrachys guangxiensis (Chinese earth tiger tarantula) protein is U26-theraphotoxin-Cg1b.